Consider the following 725-residue polypeptide: Dolichyl-phosphate-mannose--protein mannosyltransferase 5 (725 aa).

The next 6 helical transmembrane spans lie at 34–54 (QFAVFSILLISLIRLYKLYIP), 117–137 (YLWLRLFSGICGIGHVLLTFF), 145–165 (SVISIVITILICLENSMVTVS), 192–212 (IPFTGCWYFNLFVTGIALGLN), 219–239 (GLFTFAWVGILTCVQLWEILG), and 256–276 (VVAFIMVPLTIYCSVFYIHFE). 3 consecutive MIR domains span residues 303 to 356 (PLQV…IETK), 368 to 427 (QREV…IRML), and 439 to 495 (LIKL…VESS). N-linked (GlcNAc...) asparagine glycosylation is present at N409. A run of 4 helical transmembrane segments spans residues 570–590 (IYYLGNVAIYYSVFFVGLIAI), 619–639 (FYNNSWPYLVGWFINYIPYCL), 644–664 (LYLHHYLSALNFGILLLSQYL), and 673–693 (IIGGIITATIFVSAIYCFYEF).

It belongs to the glycosyltransferase 39 family.

It localises to the endoplasmic reticulum membrane. The enzyme catalyses a di-trans,poly-cis-dolichyl beta-D-mannosyl phosphate + L-seryl-[protein] = 3-O-(alpha-D-mannosyl)-L-seryl-[protein] + a di-trans,poly-cis-dolichyl phosphate + H(+). It carries out the reaction a di-trans,poly-cis-dolichyl beta-D-mannosyl phosphate + L-threonyl-[protein] = 3-O-(alpha-D-mannosyl)-L-threonyl-[protein] + a di-trans,poly-cis-dolichyl phosphate + H(+). Its pathway is protein modification; protein glycosylation. Protein mannosyltransferase (PMT) involved in hyphal morphogenesis and drug sensitivity. Transfers mannose from Dol-P-mannose to Ser or Thr residues on proteins. PMT1, PMT2 and PMT4 account for most of the protein-O-glycosylation activity, while PMT5 and PMT6 may specifically modulate a much narrower spectrum of target proteins. Required for biofilm formation. The protein is Dolichyl-phosphate-mannose--protein mannosyltransferase 5 of Candida albicans (strain SC5314 / ATCC MYA-2876) (Yeast).